A 371-amino-acid chain; its full sequence is Queuine tRNA-ribosyltransferase (371 aa).

Catalysis depends on aspartate 93, which acts as the Proton acceptor. Residues 93-97 (DSGGF), aspartate 147, glutamine 191, and glycine 218 each bind substrate. Positions 249–255 (GVGTPLD) are RNA binding. Catalysis depends on aspartate 268, which acts as the Nucleophile. Residues 273 to 277 (TRNAR) form an RNA binding; important for wobble base 34 recognition region. Positions 306, 308, 311, and 337 each coordinate Zn(2+).

Belongs to the queuine tRNA-ribosyltransferase family. Homodimer. Within each dimer, one monomer is responsible for RNA recognition and catalysis, while the other monomer binds to the replacement base PreQ1. It depends on Zn(2+) as a cofactor.

It carries out the reaction 7-aminomethyl-7-carbaguanine + guanosine(34) in tRNA = 7-aminomethyl-7-carbaguanosine(34) in tRNA + guanine. It functions in the pathway tRNA modification; tRNA-queuosine biosynthesis. Its function is as follows. Catalyzes the base-exchange of a guanine (G) residue with the queuine precursor 7-aminomethyl-7-deazaguanine (PreQ1) at position 34 (anticodon wobble position) in tRNAs with GU(N) anticodons (tRNA-Asp, -Asn, -His and -Tyr). Catalysis occurs through a double-displacement mechanism. The nucleophile active site attacks the C1' of nucleotide 34 to detach the guanine base from the RNA, forming a covalent enzyme-RNA intermediate. The proton acceptor active site deprotonates the incoming PreQ1, allowing a nucleophilic attack on the C1' of the ribose to form the product. After dissociation, two additional enzymatic reactions on the tRNA convert PreQ1 to queuine (Q), resulting in the hypermodified nucleoside queuosine (7-(((4,5-cis-dihydroxy-2-cyclopenten-1-yl)amino)methyl)-7-deazaguanosine). This chain is Queuine tRNA-ribosyltransferase, found in Lawsonia intracellularis (strain PHE/MN1-00).